Consider the following 311-residue polypeptide: Probable cell division protein WhiA (311 aa).

Residues 274-307 (SLKELGSLLTPPLTKSGVNHRFRKLELIAEKIRN) constitute a DNA-binding region (H-T-H motif).

It belongs to the WhiA family.

In terms of biological role, involved in cell division and chromosome segregation. This is Probable cell division protein WhiA from Carboxydothermus hydrogenoformans (strain ATCC BAA-161 / DSM 6008 / Z-2901).